Consider the following 75-residue polypeptide: Small ribosomal subunit protein bS21 (75 aa).

Residues 52 to 75 (RRARKLARKRAQREGLIGGRPGAR) form a disordered region. A compositionally biased stretch (basic residues) spans 53–62 (RARKLARKRA).

The protein belongs to the bacterial ribosomal protein bS21 family.

This is Small ribosomal subunit protein bS21 from Brucella anthropi (strain ATCC 49188 / DSM 6882 / CCUG 24695 / JCM 21032 / LMG 3331 / NBRC 15819 / NCTC 12168 / Alc 37) (Ochrobactrum anthropi).